Consider the following 99-residue polypeptide: Putative protein tag-209 (99 aa).

The signal sequence occupies residues 1-16; that stretch reads MLKLLAFVALLSVSVS.

The chain is Putative protein tag-209 (tag-209) from Caenorhabditis elegans.